The chain runs to 43 residues: Protein PsbN (43 aa).

A helical membrane pass occupies residues 5–27 (TLVTISISCLLVSFTGYALYTAF).

The protein belongs to the PsbN family.

It is found in the plastid. The protein resides in the chloroplast thylakoid membrane. Its function is as follows. May play a role in photosystem I and II biogenesis. The protein is Protein PsbN of Pinus koraiensis (Korean pine).